We begin with the raw amino-acid sequence, 357 residues long: CD4+ T-cell-stimulating antigen (357 aa).

A signal peptide spans Met-1 to Ala-22. Cys-23 carries the N-palmitoyl cysteine lipid modification. Cys-23 carries S-diacylglycerol cysteine lipidation.

Belongs to the BMP lipoprotein family.

Its subcellular location is the cell membrane. This is CD4+ T-cell-stimulating antigen (tcsA) from Listeria innocua serovar 6a (strain ATCC BAA-680 / CLIP 11262).